The following is a 502-amino-acid chain: Sodium/proline symporter (502 aa).

13 consecutive transmembrane segments (helical) span residues 6 to 26 (PMLV…FIAW), 42 to 62 (LGPF…WLLM), 68 to 88 (IFLS…GAWI), 127 to 147 (IISA…GIVA), 163 to 183 (ALWA…FLAV), 192 to 212 (SLMI…VGGF), 235 to 255 (FVAI…PHIL), 276 to 296 (TWMI…IAYF), 320 to 340 (ILFN…AVMS), 371 to 391 (LVWV…ALAA), 398 to 418 (LGLV…VVLF), 430 to 450 (ALAG…YGWL), and 452 to 472 (LYEI…FSLL).

It belongs to the sodium:solute symporter (SSF) (TC 2.A.21) family.

Its subcellular location is the cell inner membrane. The catalysed reaction is L-proline(in) + Na(+)(in) = L-proline(out) + Na(+)(out). Its function is as follows. Catalyzes the sodium-dependent uptake of extracellular L-proline. The sequence is that of Sodium/proline symporter from Salmonella typhimurium (strain LT2 / SGSC1412 / ATCC 700720).